A 422-amino-acid chain; its full sequence is UPF0761 membrane protein LHK_02978 (422 aa).

Helical transmembrane passes span 44-64 (LLSL…FPVF), 102-122 (LTAV…LTID), 141-161 (MLVY…GISG), 178-198 (LAGI…LTVL), 212-232 (ALIG…GFGL), and 246-266 (AFAT…TVLI).

This sequence belongs to the UPF0761 family.

The protein resides in the cell inner membrane. The polypeptide is UPF0761 membrane protein LHK_02978 (Laribacter hongkongensis (strain HLHK9)).